The chain runs to 412 residues: MTTQFSVEGIELELTRYPKNQESNLQAWDAADEHLIKHLKETEQVPVATAIINDNFGALTACLRSMESQWPLAVETDAKTSQLGTVQNLENNTLSSDNIQWLNSRENIPGAIELVLMKLPKNLSYFAHQLNRLSQVLPEGTQVLIGAKAKSINKSLLELFAKNLGPASASLTWKKTRVITCTADGKVRALPTESQWSIPDLNLNITNLSNVFASGKLDIGARIMLDNMPKGDFKSIIDLGCGNGVLGLNAKQLFPQAYIHFVDDSEMAVESARQNWALNKLDTLGLVGEQATFGWDDCLTHLNEGIRPELILCNPPFHQGEAITDHIAWQMFLQSWRALKNGGILHVVGNRHLAYHVKLQRIFKNCTTVASNGKFVILQAQKISKKAEPHENGESSSDTPNPQSSLYGGVKR.

Positions 386-412 (KAEPHENGESSSDTPNPQSSLYGGVKR) are disordered. Polar residues predominate over residues 394–406 (ESSSDTPNPQSSL).

Belongs to the methyltransferase superfamily. RlmG family.

Its subcellular location is the cytoplasm. The enzyme catalyses guanosine(1835) in 23S rRNA + S-adenosyl-L-methionine = N(2)-methylguanosine(1835) in 23S rRNA + S-adenosyl-L-homocysteine + H(+). Its function is as follows. Specifically methylates the guanine in position 1835 (m2G1835) of 23S rRNA. In Shewanella sediminis (strain HAW-EB3), this protein is Ribosomal RNA large subunit methyltransferase G.